A 135-amino-acid chain; its full sequence is Small ribosomal subunit protein bS16 (135 aa).

Residues 105–120 show a composition bias toward basic and acidic residues; sequence DEKKKPVLKPKTEKAA. The segment at 105-135 is disordered; the sequence is DEKKKPVLKPKTEKAAPEAAAPEAEATEEQA.

The protein belongs to the bacterial ribosomal protein bS16 family.

The polypeptide is Small ribosomal subunit protein bS16 (Clavibacter sepedonicus (Clavibacter michiganensis subsp. sepedonicus)).